The chain runs to 207 residues: MARYTEAVCRLCRREGMKLYLKGDRCYTDKCAISKRTYAPGQHGQSRKKLSNYGLQLREKQKAKRFYGVLESQFRKYFEIADKQAGITGENLLRLLETRLDNVAYRLGFGSSRAEARQLVVHGHFTVNGKKVDIPSYLVSAGDTIAVAEKSKSSAKFKALAENAKGNTPNWLTVDVEKLEGKVVALPSREDIDLEIAENLIVELYSK.

Positions 98–158 (TRLDNVAYRL…EKSKSSAKFK (61 aa)) constitute an S4 RNA-binding domain.

The protein belongs to the universal ribosomal protein uS4 family. Part of the 30S ribosomal subunit. Contacts protein S5. The interaction surface between S4 and S5 is involved in control of translational fidelity.

In terms of biological role, one of the primary rRNA binding proteins, it binds directly to 16S rRNA where it nucleates assembly of the body of the 30S subunit. With S5 and S12 plays an important role in translational accuracy. The polypeptide is Small ribosomal subunit protein uS4A (Alkaliphilus oremlandii (strain OhILAs) (Clostridium oremlandii (strain OhILAs))).